Consider the following 185-residue polypeptide: Ribosome-recycling factor (185 aa).

Belongs to the RRF family.

The protein localises to the cytoplasm. Functionally, responsible for the release of ribosomes from messenger RNA at the termination of protein biosynthesis. May increase the efficiency of translation by recycling ribosomes from one round of translation to another. The polypeptide is Ribosome-recycling factor (Streptococcus pneumoniae (strain 70585)).